An 869-amino-acid chain; its full sequence is Valine--tRNA ligase (869 aa).

The 'HIGH' region signature appears at 47–57; the sequence is PYPTGNFHIGN. Residues 521-525 carry the 'KMSKS' region motif; the sequence is KMSKS. Lys524 is a binding site for ATP.

This sequence belongs to the class-I aminoacyl-tRNA synthetase family. ValS type 2 subfamily.

The protein localises to the cytoplasm. It catalyses the reaction tRNA(Val) + L-valine + ATP = L-valyl-tRNA(Val) + AMP + diphosphate. Catalyzes the attachment of valine to tRNA(Val). As ValRS can inadvertently accommodate and process structurally similar amino acids such as threonine, to avoid such errors, it has a 'posttransfer' editing activity that hydrolyzes mischarged Thr-tRNA(Val) in a tRNA-dependent manner. The sequence is that of Valine--tRNA ligase from Methanosarcina acetivorans (strain ATCC 35395 / DSM 2834 / JCM 12185 / C2A).